Consider the following 242-residue polypeptide: Ubiquinone biosynthesis O-methyltransferase (242 aa).

Arginine 44, glycine 64, aspartate 85, and methionine 129 together coordinate S-adenosyl-L-methionine.

It belongs to the methyltransferase superfamily. UbiG/COQ3 family.

It carries out the reaction a 3-demethylubiquinol + S-adenosyl-L-methionine = a ubiquinol + S-adenosyl-L-homocysteine + H(+). The enzyme catalyses a 3-(all-trans-polyprenyl)benzene-1,2-diol + S-adenosyl-L-methionine = a 2-methoxy-6-(all-trans-polyprenyl)phenol + S-adenosyl-L-homocysteine + H(+). Its pathway is cofactor biosynthesis; ubiquinone biosynthesis. Functionally, O-methyltransferase that catalyzes the 2 O-methylation steps in the ubiquinone biosynthetic pathway. The polypeptide is Ubiquinone biosynthesis O-methyltransferase (Salmonella typhi).